A 396-amino-acid chain; its full sequence is Tryptophan synthase beta chain (396 aa).

Lys86 carries the N6-(pyridoxal phosphate)lysine modification.

Belongs to the TrpB family. Tetramer of two alpha and two beta chains. Pyridoxal 5'-phosphate serves as cofactor.

The enzyme catalyses (1S,2R)-1-C-(indol-3-yl)glycerol 3-phosphate + L-serine = D-glyceraldehyde 3-phosphate + L-tryptophan + H2O. It functions in the pathway amino-acid biosynthesis; L-tryptophan biosynthesis; L-tryptophan from chorismate: step 5/5. Its function is as follows. The beta subunit is responsible for the synthesis of L-tryptophan from indole and L-serine. This chain is Tryptophan synthase beta chain, found in Pectobacterium carotovorum subsp. carotovorum (strain PC1).